A 148-amino-acid polypeptide reads, in one-letter code: Ribonuclease pancreatic (148 aa).

The first 25 residues, 1–25 (MGLEKSLILFPLLVLVVGWVQPSLG), serve as a signal peptide directing secretion. Substrate contacts are provided by residues Lys-32, Arg-35, 65–69 (KPVNT), Lys-90, and Arg-109. 4 disulfides stabilise this stretch: Cys-50–Cys-108, Cys-64–Cys-119, Cys-82–Cys-134, and Cys-89–Cys-96. Residue His-143 is the Proton donor of the active site.

This sequence belongs to the pancreatic ribonuclease family. In terms of assembly, monomer. Interacts with and forms tight 1:1 complexes with RNH1. Dimerization of two such complexes may occur. Interaction with RNH1 inhibits this protein. Pancreas.

Its subcellular location is the secreted. It carries out the reaction an [RNA] containing cytidine + H2O = an [RNA]-3'-cytidine-3'-phosphate + a 5'-hydroxy-ribonucleotide-3'-[RNA].. The catalysed reaction is an [RNA] containing uridine + H2O = an [RNA]-3'-uridine-3'-phosphate + a 5'-hydroxy-ribonucleotide-3'-[RNA].. Functionally, endonuclease that catalyzes the cleavage of RNA on the 3' side of pyrimidine nucleotides. Acts on single-stranded and double-stranded RNA. In Peromyscus leucopus (White-footed mouse), this protein is Ribonuclease pancreatic (RNASE1).